Consider the following 618-residue polypeptide: uncharacterized protein (618 aa).

The tract at residues 1–45 (MSSKSASKLKREAKKAERLAAKGESVKPSKKNGTKNGKDKEVDGV) is disordered. Basic and acidic residues-rich tracts occupy residues 14-27 (KKAE…ESVK) and 36-45 (NGKDKEVDGV). 2 positions are modified to phosphoserine: Ser-50 and Ser-53. Residue Thr-54 is modified to Phosphothreonine. Ser-55 and Ser-64 each carry phosphoserine. ABC transporter domains lie at 76–325 (IKID…LKQQ) and 388–609 (IAFN…QSRD). ATP-binding positions include 108-115 (GDNGSGKS) and 423-430 (GKNGTGKS).

It belongs to the ABC transporter superfamily.

It localises to the cytoplasm. This is an uncharacterized protein from Schizosaccharomyces pombe (strain 972 / ATCC 24843) (Fission yeast).